An 88-amino-acid polypeptide reads, in one-letter code: Protein Aeq5-like1 (88 aa).

An N-terminal signal peptide occupies residues 1–20 (MKSVIAVLVLSLVLVNFTQA). Disulfide bonds link Cys29/Cys68, Cys33/Cys64, Cys40/Cys56, and Cys47/Cys53.

In terms of tissue distribution, is expressed in the ectodermal cells of gastrulae and planulae. Is also noticeable in the endoderm in late planulae. In the primary polyps, is expressed in both ectoderm (sensory neurons) and endoderm (ganglions). Is not expressed in nematocytes.

Functionally, probable neuropeptide. This Nematostella vectensis (Starlet sea anemone) protein is Protein Aeq5-like1.